A 147-amino-acid chain; its full sequence is Leghemoglobin (147 aa).

The Globin domain occupies 2 to 147 (GFTADQEALV…LASAIKKAMS (146 aa)). A nitrated tyrosine mark is found at tyrosine 25 and tyrosine 30. Serine 45 contacts heme b. Position 45 is a phosphoserine (serine 45). Histidine 62 provides a ligand contact to O2. Heme b is bound by residues lysine 65, histidine 94, and lysine 97. Tyrosine 135 carries the nitrated tyrosine modification.

It belongs to the plant globin family. As to quaternary structure, monomer. Nitrated in effective nodules and particularly in hypoxic conditions; this mechanism may play a protective role in the symbiosis by buffering toxic peroxynitrite NO(2)(-). Nitration level decrease during nodule senescence. Post-translationally, phosphorylation at Ser-45 disrupts the molecular environment of its porphyrin ring oxygen binding pocket, thus leading to a reduced oxygen consumption and to the delivery of oxygen O(2) to symbiosomes. As to expression, root nodules.

It is found in the cytoplasm. Its subcellular location is the cytosol. The protein localises to the nucleus. Its function is as follows. Leghemoglobin that reversibly binds oxygen O(2) through a pentacoordinated heme iron. In root nodules, facilitates the diffusion of oxygen to the bacteroids while preventing the bacterial nitrogenase from being inactivated by buffering dioxygen, nitric oxide and carbon monoxide, and promoting the formation of reactive oxygen species (ROS, e.g. H(2)O(2)). This role is essential for symbiotic nitrogen fixation (SNF). This chain is Leghemoglobin (LB3), found in Medicago sativa (Alfalfa).